The sequence spans 678 residues: Secretin ExeD (678 aa).

Residues 1–25 (MINKGKGWRLATVAAALMMAGSAWA) form the signal peptide. An N0 region spans residues 26-122 (TEYSASFKNA…VVDETNPGIG (97 aa)). An N1 region spans residues 124-188 (EMVTRVVPVR…EVVRRVDKAG (65 aa)). Residues 189 to 264 (DQEVDIIKLK…MVRQLDRDLQ (76 aa)) form an N2 region. The segment at 267–348 (GNTRVFYLKY…ELEQVVAKLD (82 aa)) is N3. The segment at 353–602 (QVLVEAIIVE…VFIRPTILRD (250 aa)) is secretin. The s domain stretch occupies residues 604–678 (NVYSGISSNK…GVQPFVQGNK (75 aa)).

This sequence belongs to the bacterial secretin family. GSP D subfamily. As to quaternary structure, forms a cylindrical channel with 15 subunits.

The protein resides in the cell outer membrane. Its function is as follows. Involved in a type II secretion system (T2SS, formerly general secretion pathway, GSP) for the export of proteins. This subunit forms the outer membrane channel. In Aeromonas hydrophila, this protein is Secretin ExeD (exeD).